Reading from the N-terminus, the 72-residue chain is DNA-directed RNA polymerase subunit omega (72 aa).

Belongs to the RNA polymerase subunit omega family. As to quaternary structure, the RNAP catalytic core consists of 2 alpha, 1 beta, 1 beta' and 1 omega subunit. When a sigma factor is associated with the core the holoenzyme is formed, which can initiate transcription.

The enzyme catalyses RNA(n) + a ribonucleoside 5'-triphosphate = RNA(n+1) + diphosphate. In terms of biological role, promotes RNA polymerase assembly. Latches the N- and C-terminal regions of the beta' subunit thereby facilitating its interaction with the beta and alpha subunits. This Clostridium tetani (strain Massachusetts / E88) protein is DNA-directed RNA polymerase subunit omega (rpoZ).